The primary structure comprises 330 residues: ADP-L-glycero-D-manno-heptose-6-epimerase (330 aa).

Residues 11 to 12 (FI), 32 to 33 (DN), Lys-39, Lys-54, 75 to 79 (EGACS), and Asn-92 contribute to the NADP(+) site. The active-site Proton acceptor is Tyr-139. Lys-143 provides a ligand contact to NADP(+). Asn-168 is a binding site for substrate. 2 residues coordinate NADP(+): Val-169 and Lys-177. Lys-177 (proton acceptor) is an active-site residue. Residues Arg-179, His-186, 200-203 (FGEY), Arg-213, and Tyr-292 contribute to the substrate site.

This sequence belongs to the NAD(P)-dependent epimerase/dehydratase family. HldD subfamily. As to quaternary structure, homopentamer. The cofactor is NADP(+).

The catalysed reaction is ADP-D-glycero-beta-D-manno-heptose = ADP-L-glycero-beta-D-manno-heptose. The protein operates within nucleotide-sugar biosynthesis; ADP-L-glycero-beta-D-manno-heptose biosynthesis; ADP-L-glycero-beta-D-manno-heptose from D-glycero-beta-D-manno-heptose 7-phosphate: step 4/4. In terms of biological role, catalyzes the interconversion between ADP-D-glycero-beta-D-manno-heptose and ADP-L-glycero-beta-D-manno-heptose via an epimerization at carbon 6 of the heptose. The polypeptide is ADP-L-glycero-D-manno-heptose-6-epimerase (Burkholderia pseudomallei (strain 1026b)).